Reading from the N-terminus, the 637-residue chain is Biosynthetic arginine decarboxylase (637 aa).

Lysine 101 carries the N6-(pyridoxal phosphate)lysine modification. 286–296 is a substrate binding site; it reads FDVGGGLAVDY.

This sequence belongs to the Orn/Lys/Arg decarboxylase class-II family. SpeA subfamily. Mg(2+) is required as a cofactor. Requires pyridoxal 5'-phosphate as cofactor.

The enzyme catalyses L-arginine + H(+) = agmatine + CO2. Its pathway is amine and polyamine biosynthesis; agmatine biosynthesis; agmatine from L-arginine: step 1/1. Its function is as follows. Catalyzes the biosynthesis of agmatine from arginine. In Shewanella woodyi (strain ATCC 51908 / MS32), this protein is Biosynthetic arginine decarboxylase.